Reading from the N-terminus, the 87-residue chain is MVNMKASMFLTFAGLVLLFVVCYASESEEKEFPKEMLSSIFAVDKDFKQEERDCAGYMRECKEKLCCSGYVCSSRWKWCVLPAPWRR.

Residues 1–24 (MVNMKASMFLTFAGLVLLFVVCYA) form the signal peptide. A propeptide spanning residues 25–52 (SESEEKEFPKEMLSSIFAVDKDFKQEER) is cleaved from the precursor. Disulfide bonds link C54–C67, C61–C72, and C66–C79.

It belongs to the neurotoxin 10 (Hwtx-1) family. 51 (Hntx-8) subfamily. Hntx-8 sub-subfamily. In terms of tissue distribution, expressed by the venom gland.

The protein localises to the secreted. Functionally, ion channel inhibitor. This Cyriopagopus hainanus (Chinese bird spider) protein is U3-theraphotoxin-Hhn1a 12.